The sequence spans 251 residues: 1-(5-phosphoribosyl)-5-[(5-phosphoribosylamino)methylideneamino] imidazole-4-carboxamide isomerase (251 aa).

Residue Asp8 is the Proton acceptor of the active site. Catalysis depends on Asp131, which acts as the Proton donor.

It belongs to the HisA/HisF family.

The protein resides in the cytoplasm. It catalyses the reaction 1-(5-phospho-beta-D-ribosyl)-5-[(5-phospho-beta-D-ribosylamino)methylideneamino]imidazole-4-carboxamide = 5-[(5-phospho-1-deoxy-D-ribulos-1-ylimino)methylamino]-1-(5-phospho-beta-D-ribosyl)imidazole-4-carboxamide. It functions in the pathway amino-acid biosynthesis; L-histidine biosynthesis; L-histidine from 5-phospho-alpha-D-ribose 1-diphosphate: step 4/9. In Burkholderia ambifaria (strain MC40-6), this protein is 1-(5-phosphoribosyl)-5-[(5-phosphoribosylamino)methylideneamino] imidazole-4-carboxamide isomerase.